We begin with the raw amino-acid sequence, 297 residues long: Tyrosine recombinase XerD (297 aa).

The Core-binding (CB) domain occupies 1–86; it reads MNDLIDDFLH…SLRSFFHYLM (86 aa). In terms of domain architecture, Tyr recombinase spans 107–291; it reads SLPKVLNLDD…TKLRLKDVYK (185 aa). Catalysis depends on residues Arg147, Lys171, His243, Arg246, and His269. The active-site O-(3'-phospho-DNA)-tyrosine intermediate is Tyr278.

It belongs to the 'phage' integrase family. XerD subfamily. Forms a cyclic heterotetrameric complex composed of two molecules of XerC and two molecules of XerD.

It is found in the cytoplasm. Functionally, site-specific tyrosine recombinase, which acts by catalyzing the cutting and rejoining of the recombining DNA molecules. The XerC-XerD complex is essential to convert dimers of the bacterial chromosome into monomers to permit their segregation at cell division. It also contributes to the segregational stability of plasmids. In Listeria innocua serovar 6a (strain ATCC BAA-680 / CLIP 11262), this protein is Tyrosine recombinase XerD.